A 250-amino-acid chain; its full sequence is MEWHDEGLIIGLRRYGETGAILEVFTPAHGRHFGLVRGGFGRRLRALLQPGNQADFTWRARLDQQLGLLAVEPTKLMTTRLFASGLALQGMNLIAALLRLLPERDPHPELYAVVRVLLEHLDEPAVAPILLARFELAMLTETGFGLDLSACAATGATQELIYVSPKSGRAVSARAGAPYHDKLLGLPPFFLDGSLLKNPTLEEVEAGFALTGHFLMRDLFGPRGQTLPDARHAFLAETAKTYPRVAPQCF.

The protein belongs to the RecO family.

Involved in DNA repair and RecF pathway recombination. The chain is DNA repair protein RecO from Beijerinckia indica subsp. indica (strain ATCC 9039 / DSM 1715 / NCIMB 8712).